The following is an 89-amino-acid chain: Small ribosomal subunit protein uS15 (89 aa).

Belongs to the universal ribosomal protein uS15 family. In terms of assembly, part of the 30S ribosomal subunit. Forms a bridge to the 50S subunit in the 70S ribosome, contacting the 23S rRNA.

In terms of biological role, one of the primary rRNA binding proteins, it binds directly to 16S rRNA where it helps nucleate assembly of the platform of the 30S subunit by binding and bridging several RNA helices of the 16S rRNA. Functionally, forms an intersubunit bridge (bridge B4) with the 23S rRNA of the 50S subunit in the ribosome. This is Small ribosomal subunit protein uS15 from Hahella chejuensis (strain KCTC 2396).